The sequence spans 82 residues: Sulfur carrier protein TusA (82 aa).

Catalysis depends on Cys-19, which acts as the Cysteine persulfide intermediate.

This sequence belongs to the sulfur carrier protein TusA family.

The protein localises to the cytoplasm. Sulfur carrier protein which probably makes part of a sulfur-relay system. The chain is Sulfur carrier protein TusA from Vibrio campbellii (strain ATCC BAA-1116).